A 611-amino-acid polypeptide reads, in one-letter code: V-type proton ATPase catalytic subunit A (611 aa).

Position 244 to 251 (244 to 251) interacts with ATP; sequence GAFGCGKT.

Belongs to the ATPase alpha/beta chains family. As to quaternary structure, V-ATPase is a heteromultimeric enzyme made up of two complexes: the ATP-hydrolytic V1 complex and the proton translocation V0 complex. The V1 complex consists of three catalytic AB heterodimers that form a heterohexamer, three peripheral stalks each consisting of EG heterodimers, one central rotor including subunits D and F, and the regulatory subunits C and H. The proton translocation complex V0 consists of the proton transport subunit a, a ring of proteolipid subunits c9c'', rotary subunit d and subunit e.

The protein resides in the cell membrane. The protein localises to the vacuole. It localises to the vesicle. The catalysed reaction is ATP + H2O + 4 H(+)(in) = ADP + phosphate + 5 H(+)(out). Its activity is regulated as follows. ATP hydrolysis occurs at the interface between the nucleotide-binding domains of subunits A and B. ATP hydrolysis triggers a conformational change in the subunits D and F, which induces a shift of subunit d. The c-ring is subsequently rotated and results in a continuous proton translocation across the membrane. Its function is as follows. Catalytic subunit of the V1 complex of vacuolar(H+)-ATPase (V-ATPase), a multisubunit enzyme composed of a peripheral complex (V1) that hydrolyzes ATP and a membrane integral complex (V0) that translocates protons. V-ATPase is responsible for acidifying and maintaining the pH of intracellular compartments and in some cell types, is targeted to the plasma membrane, where it is responsible for acidifying the extracellular environment. During the trophozoite stage, involved in the acidification of the extracellular space next to the cell membrane. The sequence is that of V-type proton ATPase catalytic subunit A from Plasmodium falciparum (isolate 3D7).